The primary structure comprises 736 residues: 1,4-alpha-glucan branching enzyme GlgB (736 aa).

Aspartate 415 serves as the catalytic Nucleophile. The active-site Proton donor is glutamate 470.

This sequence belongs to the glycosyl hydrolase 13 family. GlgB subfamily. In terms of assembly, monomer.

It catalyses the reaction Transfers a segment of a (1-&gt;4)-alpha-D-glucan chain to a primary hydroxy group in a similar glucan chain.. The protein operates within glycan biosynthesis; glycogen biosynthesis. Its function is as follows. Catalyzes the formation of the alpha-1,6-glucosidic linkages in glycogen by scission of a 1,4-alpha-linked oligosaccharide from growing alpha-1,4-glucan chains and the subsequent attachment of the oligosaccharide to the alpha-1,6 position. This Burkholderia cenocepacia (strain HI2424) protein is 1,4-alpha-glucan branching enzyme GlgB.